A 242-amino-acid polypeptide reads, in one-letter code: Uridylate kinase (242 aa).

An ATP-binding site is contributed by lysine 15 to glycine 18. The interval glycine 23 to glycine 28 is involved in allosteric activation by GTP. Glycine 57 contributes to the UMP binding site. Positions 58 and 62 each coordinate ATP. UMP contacts are provided by residues aspartate 77 and threonine 138–threonine 145. Positions 165, 171, and 174 each coordinate ATP.

The protein belongs to the UMP kinase family. As to quaternary structure, homohexamer.

It localises to the cytoplasm. The enzyme catalyses UMP + ATP = UDP + ADP. Its pathway is pyrimidine metabolism; CTP biosynthesis via de novo pathway; UDP from UMP (UMPK route): step 1/1. Allosterically activated by GTP. Inhibited by UTP. In terms of biological role, catalyzes the reversible phosphorylation of UMP to UDP. The sequence is that of Uridylate kinase from Shewanella sp. (strain ANA-3).